The following is a 124-amino-acid chain: Small ribosomal subunit protein bS6m (124 aa).

This sequence belongs to the bacterial ribosomal protein bS6 family. In terms of assembly, component of the mitochondrial ribosome small subunit (28S) which comprises a 12S rRNA and about 30 distinct proteins.

It is found in the mitochondrion. The polypeptide is Small ribosomal subunit protein bS6m (MRPS6) (Bos taurus (Bovine)).